The chain runs to 396 residues: Methionine import ATP-binding protein MetN 2 (396 aa).

An ABC transporter domain is found at 41–280 (VSFELVGKVF…PRHGATRALL (240 aa)). Residue 77 to 84 (GRSGAGKS) coordinates ATP.

The protein belongs to the ABC transporter superfamily. Methionine importer (TC 3.A.1.24) family. In terms of assembly, the complex is composed of two ATP-binding proteins (MetN), two transmembrane proteins (MetI) and a solute-binding protein (MetQ).

The protein resides in the cell inner membrane. The enzyme catalyses L-methionine(out) + ATP + H2O = L-methionine(in) + ADP + phosphate + H(+). The catalysed reaction is D-methionine(out) + ATP + H2O = D-methionine(in) + ADP + phosphate + H(+). Its function is as follows. Part of the ABC transporter complex MetNIQ involved in methionine import. Responsible for energy coupling to the transport system. This is Methionine import ATP-binding protein MetN 2 from Burkholderia pseudomallei (strain K96243).